The primary structure comprises 259 residues: HTH-type transcriptional regulator TtgV (259 aa).

The region spanning 14–76 is the HTH iclR-type domain; sequence IQVIARAASI…GPAGGFRLGP (63 aa). Residues 36 to 59 constitute a DNA-binding region (H-T-H motif); that stretch reads LAAIAQLVGLPRSTVQRIINALEE. An IclR-ED domain is found at 89 to 253; sequence ILSLVKPYLR…KLNIERAIGR (165 aa).

Its function is as follows. Represses the expression of the ttgGHI and ttgVW operons. Binds to the ttgGHI / ttgVW intergenic region, probably preventing binding of RNA polymerase; ttgV dissociates from this region in the presence of 1-hexanol. In Pseudomonas putida (strain DOT-T1E), this protein is HTH-type transcriptional regulator TtgV (ttgV).